The following is a 171-amino-acid chain: Small ribosomal subunit protein uS4 (171 aa).

Positions Arg-101–Glu-165 constitute an S4 RNA-binding domain. A disordered region spans residues Ser-148–Glu-171. Residues Phe-152–Glu-171 are compositionally biased toward basic and acidic residues.

This sequence belongs to the universal ribosomal protein uS4 family. Part of the 30S ribosomal subunit. Contacts protein S5. The interaction surface between S4 and S5 is involved in control of translational fidelity.

Functionally, one of the primary rRNA binding proteins, it binds directly to 16S rRNA where it nucleates assembly of the body of the 30S subunit. In terms of biological role, with S5 and S12 plays an important role in translational accuracy. This Haloarcula marismortui (strain ATCC 43049 / DSM 3752 / JCM 8966 / VKM B-1809) (Halobacterium marismortui) protein is Small ribosomal subunit protein uS4.